The primary structure comprises 465 residues: Glutamate--tRNA ligase (465 aa).

A 'HIGH' region motif is present at residues 11–21 (PSPTGFIHLGN). The 'KMSKS' region motif lies at 243 to 247 (KMSKR). K246 is a binding site for ATP.

The protein belongs to the class-I aminoacyl-tRNA synthetase family. Glutamate--tRNA ligase type 1 subfamily. In terms of assembly, monomer.

It is found in the cytoplasm. The enzyme catalyses tRNA(Glu) + L-glutamate + ATP = L-glutamyl-tRNA(Glu) + AMP + diphosphate. Catalyzes the attachment of glutamate to tRNA(Glu) in a two-step reaction: glutamate is first activated by ATP to form Glu-AMP and then transferred to the acceptor end of tRNA(Glu). In Cupriavidus metallidurans (strain ATCC 43123 / DSM 2839 / NBRC 102507 / CH34) (Ralstonia metallidurans), this protein is Glutamate--tRNA ligase.